The primary structure comprises 587 residues: Aspartate--tRNA ligase (587 aa).

E175 contacts L-aspartate. An aspartate region spans residues Q199–K202. R221 and H446 together coordinate L-aspartate. An ATP-binding site is contributed by R221–E223. E480 is a binding site for ATP. R487 is an L-aspartate binding site. G532–R535 is a binding site for ATP.

It belongs to the class-II aminoacyl-tRNA synthetase family. Type 1 subfamily. As to quaternary structure, homodimer.

The protein localises to the cytoplasm. The enzyme catalyses tRNA(Asp) + L-aspartate + ATP = L-aspartyl-tRNA(Asp) + AMP + diphosphate. Catalyzes the attachment of L-aspartate to tRNA(Asp) in a two-step reaction: L-aspartate is first activated by ATP to form Asp-AMP and then transferred to the acceptor end of tRNA(Asp). This Streptomyces avermitilis (strain ATCC 31267 / DSM 46492 / JCM 5070 / NBRC 14893 / NCIMB 12804 / NRRL 8165 / MA-4680) protein is Aspartate--tRNA ligase.